Consider the following 886-residue polypeptide: Alanine--tRNA ligase (886 aa).

H564, H568, C666, and H670 together coordinate Zn(2+).

The protein belongs to the class-II aminoacyl-tRNA synthetase family. It depends on Zn(2+) as a cofactor.

It localises to the cytoplasm. It catalyses the reaction tRNA(Ala) + L-alanine + ATP = L-alanyl-tRNA(Ala) + AMP + diphosphate. Functionally, catalyzes the attachment of alanine to tRNA(Ala) in a two-step reaction: alanine is first activated by ATP to form Ala-AMP and then transferred to the acceptor end of tRNA(Ala). Also edits incorrectly charged Ser-tRNA(Ala) and Gly-tRNA(Ala) via its editing domain. This is Alanine--tRNA ligase from Prochlorococcus marinus (strain MIT 9312).